A 602-amino-acid polypeptide reads, in one-letter code: 3-hydroxy-3-methylglutaryl-coenzyme A reductase 2 (602 aa).

2 consecutive transmembrane segments (helical) span residues 44-67 (ASDA…FFSV) and 95-115 (AIVS…IGFV). A linker region spans residues 116–187 (QTFVSRGNND…PLITSASSGE (72 aa)). A glycan (N-linked (GlcNAc...) asparagine) is linked at Asn-124. The tract at residues 188 to 602 (DEEIIKSVVQ…STKDVTKASS (415 aa)) is catalytic. Residue Glu-281 is the Charge relay system of the active site. A glycan (N-linked (GlcNAc...) asparagine) is linked at Asn-345. Residue Lys-413 is the Charge relay system of the active site. A glycan (N-linked (GlcNAc...) asparagine) is linked at Asn-458. Asp-489 functions as the Charge relay system in the catalytic mechanism. His-587 serves as the catalytic Proton donor. The N-linked (GlcNAc...) asparagine glycan is linked to Asn-591.

Belongs to the HMG-CoA reductase family.

The protein localises to the endoplasmic reticulum membrane. The enzyme catalyses (R)-mevalonate + 2 NADP(+) + CoA = (3S)-3-hydroxy-3-methylglutaryl-CoA + 2 NADPH + 2 H(+). It functions in the pathway metabolic intermediate biosynthesis; (R)-mevalonate biosynthesis; (R)-mevalonate from acetyl-CoA: step 3/3. Functionally, catalyzes the synthesis of mevalonate. The specific precursor of all isoprenoid compounds present in plants. The sequence is that of 3-hydroxy-3-methylglutaryl-coenzyme A reductase 2 (HMG2) from Solanum lycopersicum (Tomato).